A 238-amino-acid chain; its full sequence is Ribonuclease 3 (238 aa).

The RNase III domain occupies 4-134 (PRQALLDAFG…LLGAIYLHHG (131 aa)). Position 44 (Glu-44) interacts with Mg(2+). The active site involves Asp-48. Mg(2+)-binding residues include Asp-120 and Glu-123. Glu-123 is a catalytic residue. The region spanning 161–229 (DWKTSLQELT…ASAAWKALDV (69 aa)) is the DRBM domain.

It belongs to the ribonuclease III family. In terms of assembly, homodimer. It depends on Mg(2+) as a cofactor.

Its subcellular location is the cytoplasm. It catalyses the reaction Endonucleolytic cleavage to 5'-phosphomonoester.. Functionally, digests double-stranded RNA. Involved in the processing of primary rRNA transcript to yield the immediate precursors to the large and small rRNAs (23S and 16S). Processes some mRNAs, and tRNAs when they are encoded in the rRNA operon. Processes pre-crRNA and tracrRNA of type II CRISPR loci if present in the organism. This is Ribonuclease 3 from Mycobacterium leprae (strain TN).